Here is a 137-residue protein sequence, read N- to C-terminus: Small ribosomal subunit protein bS18c (137 aa).

It belongs to the bacterial ribosomal protein bS18 family. As to quaternary structure, part of the 30S ribosomal subunit.

Its subcellular location is the plastid. The protein localises to the chloroplast. This chain is Small ribosomal subunit protein bS18c (rps18), found in Chlamydomonas reinhardtii (Chlamydomonas smithii).